The chain runs to 144 residues: Aklanonic acid methyl ester cyclase AcmA (144 aa).

Substrate-binding residues include Asn51 and Gln105.

Belongs to the polyketide cyclase DnrD family. As to quaternary structure, homotetramer.

The catalysed reaction is methyl aklanonate = aklaviketone. It participates in antibiotic biosynthesis; daunorubicin biosynthesis. It functions in the pathway antibiotic biosynthesis; carminomycin biosynthesis. The protein operates within antibiotic biosynthesis; rhodomycin biosynthesis. Its pathway is antibiotic biosynthesis; aclacinomycin biosynthesis. Involved in the biosynthesis of aklavinone which is an important precursor common to the formation of the clinically significant anthracyclines such as carminomycin, daunorubicin (daunomycin), rhodomycin, aclacinomycin T (aklavin) and aclacinomycin A (aclarubicin). These compounds are aromatic polyketide antibiotics that exhibit high cytotoxicity and are widely applied in the chemotherapy of a variety of cancers. Catalyzes the cyclization of aklanonic acid methyl ester to yield aklaviketone. It is also able to use nogalonic acid methyl ester as substrate, but produces exclusively auraviketone with C9-R stereochemistry. The chain is Aklanonic acid methyl ester cyclase AcmA (acma) from Streptomyces galilaeus.